Consider the following 371-residue polypeptide: Diterpene cyclase DtcycA (371 aa).

Residues N234, S238, and E242 each coordinate Mg(2+).

Belongs to the terpene synthase family. Homodimer. Mg(2+) serves as cofactor.

The catalysed reaction is (2E,6E,10E)-geranylgeranyl diphosphate = cembrene C + diphosphate. It carries out the reaction (2E,6E,10E)-geranylgeranyl diphosphate + H2O = (R)-nephthenol + diphosphate. Functionally, diterpene cyclases that can form multiple diterpene products. This is Diterpene cyclase DtcycA from Streptomyces sp.